The chain runs to 274 residues: MAHYFVGDIQGCFAELQKLLAKVDFNPSRDELWAVGDLVARGPDSLATLRFFRSLGDSAKTVLGNHDLHLMALHGKLKRAKPSDNLTEILESPDISASIDWLRQQPLMRELPEHQLIMSHAGVPPQWSLEVLREEAALVSCALKQDDYLEALIAQMYSDSAEQWDPSAIGIERLRYCINALTRMRYLYVDGRLDFDCKQPPENCTNPQLKPWFEFVSPLRQSHTLVFGHWAALMGNVGDTKLKALDTGCCWGEHLTLWHLEKDQKITQKKLKKS.

This sequence belongs to the Ap4A hydrolase family.

It catalyses the reaction P(1),P(4)-bis(5'-adenosyl) tetraphosphate + H2O = 2 ADP + 2 H(+). Functionally, hydrolyzes diadenosine 5',5'''-P1,P4-tetraphosphate to yield ADP. This is Bis(5'-nucleosyl)-tetraphosphatase, symmetrical from Shewanella baltica (strain OS185).